Here is a 285-residue protein sequence, read N- to C-terminus: Small ribosomal subunit protein uS5x (285 aa).

The segment covering 1–19 has biased composition (basic and acidic residues); it reads MAERGGERGVERGGERGDF. Positions 1–51 are disordered; sequence MAERGGERGVERGGERGDFGRGFGGRGGRGDRGGRGRGGRGGRRGGRASEE. Positions 35-46 are enriched in basic residues; sequence RGRGGRGGRRGG. Positions 96 to 159 constitute an S5 DRBM domain; the sequence is LKDEVMKIMP…ILAKLSVVPV (64 aa).

The protein belongs to the universal ribosomal protein uS5 family. Interacts with MBD6.

Its function is as follows. Component of the ribosome, a large ribonucleoprotein complex responsible for the synthesis of proteins in the cell. The small ribosomal subunit (SSU) binds messenger RNAs (mRNAs) and translates the encoded message by selecting cognate aminoacyl-transfer RNA (tRNA) molecules. The large subunit (LSU) contains the ribosomal catalytic site termed the peptidyl transferase center (PTC), which catalyzes the formation of peptide bonds, thereby polymerizing the amino acids delivered by tRNAs into a polypeptide chain. The nascent polypeptides leave the ribosome through a tunnel in the LSU and interact with protein factors that function in enzymatic processing, targeting, and the membrane insertion of nascent chains at the exit of the ribosomal tunnel. Plays a role in the assembly and function of the 40S ribosomal subunit. Mutations in this protein affects the control of translational fidelity. Involved in nucleolar processing of pre-18S ribosomal RNA and ribosome assembly. Also involved in RNA-directed DNA methylation (RdDM). The polypeptide is Small ribosomal subunit protein uS5x (Arabidopsis thaliana (Mouse-ear cress)).